The primary structure comprises 84 residues: U8-theraphotoxin-Hhn1c 2 (84 aa).

The signal sequence occupies residues 1 to 21 (MKVVLLVCLVWMMAMMELVSC). Cystine bridges form between cysteine 23-cysteine 35, cysteine 29-cysteine 44, cysteine 34-cysteine 67, cysteine 54-cysteine 75, and cysteine 69-cysteine 81.

Belongs to the AVIT (prokineticin) family. As to expression, expressed by the venom gland.

The protein localises to the secreted. The sequence is that of U8-theraphotoxin-Hhn1c 2 from Cyriopagopus hainanus (Chinese bird spider).